The primary structure comprises 193 residues: Dual-action ribosomal maturation protein DarP (193 aa).

This sequence belongs to the DarP family.

The protein localises to the cytoplasm. Functionally, member of a network of 50S ribosomal subunit biogenesis factors which assembles along the 30S-50S interface, preventing incorrect 23S rRNA structures from forming. Promotes peptidyl transferase center (PTC) maturation. The chain is Dual-action ribosomal maturation protein DarP from Vibrio cholerae serotype O1 (strain ATCC 39315 / El Tor Inaba N16961).